The sequence spans 105 residues: Large ribosomal subunit protein eL36 (105 aa).

The tract at residues valine 9–arginine 31 is disordered. Basic residues predominate over residues lysine 13 to arginine 31. An N6-acetyllysine modification is found at lysine 62.

Belongs to the eukaryotic ribosomal protein eL36 family. As to quaternary structure, component of the large ribosomal subunit.

Its subcellular location is the cytoplasm. The protein resides in the cytosol. Component of the large ribosomal subunit. The ribosome is a large ribonucleoprotein complex responsible for the synthesis of proteins in the cell. In Oryctolagus cuniculus (Rabbit), this protein is Large ribosomal subunit protein eL36 (RPL36).